The following is a 621-amino-acid chain: Chaperone protein HtpG (621 aa).

The segment at 1–341 (MSNQEYTFQT…SEDLPLNVSR (341 aa)) is a; substrate-binding. Positions 342–547 (EILQQNKILA…GDEQNAMMAN (206 aa)) are b. Positions 548–621 (WMRQMGQSVP…RLNSVLLKAL (74 aa)) are c.

Belongs to the heat shock protein 90 family. Homodimer.

The protein localises to the cytoplasm. Its function is as follows. Molecular chaperone. Has ATPase activity. The sequence is that of Chaperone protein HtpG from Helicobacter pylori (strain ATCC 700392 / 26695) (Campylobacter pylori).